The chain runs to 689 residues: Glycine--tRNA ligase beta subunit (689 aa).

This sequence belongs to the class-II aminoacyl-tRNA synthetase family. In terms of assembly, tetramer of two alpha and two beta subunits.

The protein resides in the cytoplasm. It catalyses the reaction tRNA(Gly) + glycine + ATP = glycyl-tRNA(Gly) + AMP + diphosphate. The polypeptide is Glycine--tRNA ligase beta subunit (Salmonella schwarzengrund (strain CVM19633)).